Consider the following 614-residue polypeptide: MDQARISFFPDGLRVMIIDDDAKAVRRATATLSQLQYAVVATHSTASAGLRALSGDNVVEIQAILCDVHKVVSSGFDFRRVVESELRIPVIYLLSKMEEEDMVAGEDAEFLNHLLLTATYIVRKPLNPTVMARLWRVVAWRMYCLEERIQANVAANAGAGGEDDDDDDDVVIVEEPQVHFKVVRRTSGGSRKRQLTINVVDDGNRGSGSGGGGGGGADANPTRILQHITSNLQEFRTKHQKKDMAIERPLISSDSMFLKAILPTLKISPCNPLILTGGIGSSSVAAEAFAGGSSSAAPLQIPVFQQQSTGNGNTVISFSNNASPMAMRAPTDNTMISFNNVSAAPVANAVISFSNISRSAAMQAPAARGQHLSGDVQQLDFPQQKLYFGPFSYQGPPPPSMHNHINLLPPTSSPVTCSMDKGKVPIIELPYGMPVDDFLVGQTAYGGAGLSIGATDAAATAYPYTDAPSNNVATGCLMVPRMGPAFSITEPTVVAQGEGIGTGVDAGTSEKNAIVEAPNNPAPLMVLDQVAADAAMDVEEDIMFSLESLLGPDYDLLPMEDVSAPDTAAAGDAAGGSLDGEEGGMDIGWDLDLDDILVENVNDFAFLDNLAGSE.

In terms of domain architecture, Response regulatory spans R14–A139. D67 bears the 4-aspartylphosphate mark. The tract at residues R193–N220 is disordered. The span at R205–A217 shows a compositional bias: gly residues.

Belongs to the ARR family. Type-B subfamily. Two-component system major event consists of a His-to-Asp phosphorelay between a sensor histidine kinase (HK) and a response regulator (RR). In plants, the His-to-Asp phosphorelay involves an additional intermediate named Histidine-containing phosphotransfer protein (HPt). This multistep phosphorelay consists of a His-Asp-His-Asp sequential transfer of a phosphate group between first a His and an Asp of the HK protein, followed by the transfer to a conserved His of the HPt protein and finally the transfer to an Asp in the receiver domain of the RR protein.

In terms of biological role, functions as a response regulator involved in His-to-Asp phosphorelay signal transduction system. Phosphorylation of the Asp residue in the receiver domain activates the ability of the protein to promote the transcription of target genes. May directly activate some type-A response regulators in response to cytokinins. The polypeptide is Two-component response regulator ORR33 (Oryza sativa subsp. indica (Rice)).